The primary structure comprises 139 residues: uncharacterized protein (139 aa).

The protein resides in the mitochondrion. This is an uncharacterized protein from Marchantia polymorpha (Common liverwort).